Reading from the N-terminus, the 142-residue chain is Relaxin-3 (142 aa).

The N-terminal stretch at 1-25 is a signal peptide; the sequence is MARYKLLLLLAVWVLTGELWPGAEA. 3 disulfide bridges follow: cysteine 35-cysteine 129, cysteine 47-cysteine 142, and cysteine 128-cysteine 133. Residues 55–118 constitute a propeptide, connecting peptide; sequence SDILAHEAMG…GTPGALRGSR (64 aa).

Belongs to the insulin family. As to quaternary structure, heterodimer of a B chain and an A chain linked by two disulfide bonds.

It is found in the secreted. Its function is as follows. May play a role in neuropeptide signaling processes. Ligand for LGR7, RXFP3 and RXFP4. The chain is Relaxin-3 (RLN3) from Pan troglodytes (Chimpanzee).